The following is a 750-amino-acid chain: GTP pyrophosphokinase rsh (750 aa).

The HD domain occupies 45-144 (YFSHPLEVAA…VKLADRLHNM (100 aa)). A TGS domain is found at 390 to 451 (DQVFCFTPKG…KNGDEVDIIR (62 aa)). Residues 587 to 613 (AAKVDPAATTPKPGKRALPIRGTNPDL) are disordered. The 75-residue stretch at 676–750 (RISVSAINSP…SVSSAKRVNG (75 aa)) folds into the ACT domain.

This sequence belongs to the RelA/SpoT family.

The catalysed reaction is GTP + ATP = guanosine 3'-diphosphate 5'-triphosphate + AMP. In terms of biological role, functions as a (p)ppGpp synthase. In eubacteria ppGpp (guanosine 3'-diphosphate 5'-diphosphate) is a mediator of the stringent response that coordinates a variety of cellular activities in response to changes in nutritional abundance. It is necessary for persistence in mice, essential for intracellular growth of Brucella and required for expression of the type IV secretion system VirB and therefore plays a role in adaptation of Brucella to its intracellular host environment. This Brucella melitensis biotype 1 (strain ATCC 23456 / CCUG 17765 / NCTC 10094 / 16M) protein is GTP pyrophosphokinase rsh (rsh).